The sequence spans 255 residues: D-aminoacyl-tRNA deacylase (255 aa).

The protein belongs to the DtdA deacylase family. In terms of assembly, monomer. It depends on Zn(2+) as a cofactor.

The enzyme catalyses a D-aminoacyl-tRNA + H2O = a tRNA + a D-alpha-amino acid + H(+). The catalysed reaction is glycyl-tRNA(Ala) + H2O = tRNA(Ala) + glycine + H(+). Its function is as follows. D-aminoacyl-tRNA deacylase with broad substrate specificity. By recycling D-aminoacyl-tRNA to D-amino acids and free tRNA molecules, this enzyme counteracts the toxicity associated with the formation of D-aminoacyl-tRNA entities in vivo. This is D-aminoacyl-tRNA deacylase from Methanocaldococcus jannaschii (strain ATCC 43067 / DSM 2661 / JAL-1 / JCM 10045 / NBRC 100440) (Methanococcus jannaschii).